A 164-amino-acid polypeptide reads, in one-letter code: Microfibrillar-associated protein 5 (164 aa).

The first 28 residues, 1–28 (MLFLGQKALLLVLAISIPSDWLPLGVSG), serve as a signal peptide directing secretion. Residues 30-32 (RGD) carry the Cell attachment site motif. Asn70 carries N-linked (GlcNAc...) asparagine glycosylation.

This sequence belongs to the MFAP family. In terms of assembly, interacts with TGFB2. Interacts with BMP2. Interacts with FBN1 (via N-terminal domain) and FBN2. Forms intermolecular disulfide bonds either with other MAGP-2 molecules or with other components of the microfibrils.

Its subcellular location is the secreted. It localises to the extracellular space. It is found in the extracellular matrix. Its function is as follows. May play a role in hematopoiesis. In the cardiovascular system, could regulate growth factors or participate in cell signaling in maintaining large vessel integrity. Component of the elastin-associated microfibrils. This chain is Microfibrillar-associated protein 5 (Mfap5), found in Mus musculus (Mouse).